Reading from the N-terminus, the 449-residue chain is Tubulin alpha chain (449 aa).

Gln-11, Glu-71, Ser-140, Gly-144, Thr-145, Thr-179, Asn-206, and Asn-228 together coordinate GTP. Residue Glu-71 coordinates Mg(2+). Glu-254 is an active-site residue.

The protein belongs to the tubulin family. In terms of assembly, dimer of alpha and beta chains. A typical microtubule is a hollow water-filled tube with an outer diameter of 25 nm and an inner diameter of 15 nM. Alpha-beta heterodimers associate head-to-tail to form protofilaments running lengthwise along the microtubule wall with the beta-tubulin subunit facing the microtubule plus end conferring a structural polarity. Microtubules usually have 13 protofilaments but different protofilament numbers can be found in some organisms and specialized cells. It depends on Mg(2+) as a cofactor.

It is found in the cytoplasm. The protein resides in the cytoskeleton. The enzyme catalyses GTP + H2O = GDP + phosphate + H(+). Functionally, tubulin is the major constituent of microtubules, a cylinder consisting of laterally associated linear protofilaments composed of alpha- and beta-tubulin heterodimers. Microtubules grow by the addition of GTP-tubulin dimers to the microtubule end, where a stabilizing cap forms. Below the cap, tubulin dimers are in GDP-bound state, owing to GTPase activity of alpha-tubulin. The protein is Tubulin alpha chain (TUBA) of Sordaria macrospora (strain ATCC MYA-333 / DSM 997 / K(L3346) / K-hell).